The primary structure comprises 407 residues: Tyrosine--tRNA ligase (407 aa).

Y35 serves as a coordination point for L-tyrosine. The 'HIGH' region motif lies at 40-49 (PTADSLHVGH). L-tyrosine contacts are provided by Y168 and Q172. The 'KMSKS' region motif lies at 228–232 (KMGKT). K231 is a binding site for ATP. Residues 341 to 405 (NLLVDLLVKC…RGKKNFNRIV (65 aa)) enclose the S4 RNA-binding domain.

The protein belongs to the class-I aminoacyl-tRNA synthetase family. TyrS type 1 subfamily. Homodimer.

Its subcellular location is the cytoplasm. The enzyme catalyses tRNA(Tyr) + L-tyrosine + ATP = L-tyrosyl-tRNA(Tyr) + AMP + diphosphate + H(+). Its function is as follows. Catalyzes the attachment of tyrosine to tRNA(Tyr) in a two-step reaction: tyrosine is first activated by ATP to form Tyr-AMP and then transferred to the acceptor end of tRNA(Tyr). In Clostridium botulinum (strain ATCC 19397 / Type A), this protein is Tyrosine--tRNA ligase.